The primary structure comprises 589 residues: Protein kinase G11A (589 aa).

Residues 1 to 167 are disordered; the sequence is MASKAMPRAP…SACSSISSVT (167 aa). Polar residues-rich tracts occupy residues 15-36 and 63-76; these read NLQSLKLCSQNDSSLETTSPSK and TQHQNESIDLTGSN. Residues 91 to 100 are compositionally biased toward basic and acidic residues; sequence RLADEEKGVV. Positions 142–165 are enriched in low complexity; it reads SSSRCRPSTSSDVSDESACSSISS. The region spanning 195-533 is the Protein kinase domain; the sequence is FKLLKKLGCG…ATEIKQHPFF (339 aa). Residues 201–209 and lysine 224 each bind ATP; that span reads LGCGDIGSV. Residue aspartate 320 is the Proton acceptor of the active site. Residues 551-589 are disordered; the sequence is RPVEIERPPKQPVSTSEPAAAPSDAAQKSSDSYLEFDFF.

This sequence belongs to the protein kinase superfamily. Ser/Thr protein kinase family.

It carries out the reaction L-seryl-[protein] + ATP = O-phospho-L-seryl-[protein] + ADP + H(+). The catalysed reaction is L-threonyl-[protein] + ATP = O-phospho-L-threonyl-[protein] + ADP + H(+). Functionally, may play a role in the regulation of metabolism and signal transduction processes. The protein is Protein kinase G11A of Oryza sativa subsp. japonica (Rice).